The following is a 476-amino-acid chain: tRNA (cytosine(72)-C(5))-methyltransferase NSUN6 (476 aa).

A PUA domain is found at 111-203 (QGEVIVGAQC…IGIRMTEPIY (93 aa)). S-adenosyl-L-methionine contacts are provided by residues 242 to 248 (CAAPGGK), aspartate 266, aspartate 293, and aspartate 323. Cysteine 373 serves as the catalytic Nucleophile. Position 419 is an N6-acetyllysine (lysine 419).

It belongs to the class I-like SAM-binding methyltransferase superfamily. RsmB/NOP family.

The protein localises to the cytoplasm. It catalyses the reaction cytidine(72) in tRNA(Thr) + S-adenosyl-L-methionine = 5-methylcytidine(72) in tRNA(Thr) + S-adenosyl-L-homocysteine + H(+). The enzyme catalyses cytidine(72) in tRNA(Cys) + S-adenosyl-L-methionine = 5-methylcytidine(72) in tRNA(Cys) + S-adenosyl-L-homocysteine + H(+). In terms of biological role, S-adenosyl-L-methionine-dependent methyltransferase that specifically methylates the C5 position of cytosine 72 in tRNA(Thr)(TGT) and tRNA(Cys)(GCA). In vitro also methylates tRNA(Thr)(AGT). Methylation requires, in the acceptor stem region, the presence of the 3'-CCA terminus, the target site C72, the discriminator base U73, and the second and third base pairs (2:71 and 3:70) in the tRNA substrates. The sequence is that of tRNA (cytosine(72)-C(5))-methyltransferase NSUN6 from Mus musculus (Mouse).